A 281-amino-acid chain; its full sequence is Pantothenate synthetase (281 aa).

30–37 (MGNLHQGH) is an ATP binding site. Histidine 37 serves as the catalytic Proton donor. Position 61 (glutamine 61) interacts with (R)-pantoate. Glutamine 61 contacts beta-alanine. Position 149–152 (149–152 (GNKD)) interacts with ATP. Glutamine 155 contacts (R)-pantoate. ATP is bound by residues isoleucine 178 and 186-189 (MSSR).

This sequence belongs to the pantothenate synthetase family. Homodimer.

Its subcellular location is the cytoplasm. The catalysed reaction is (R)-pantoate + beta-alanine + ATP = (R)-pantothenate + AMP + diphosphate + H(+). It participates in cofactor biosynthesis; (R)-pantothenate biosynthesis; (R)-pantothenate from (R)-pantoate and beta-alanine: step 1/1. Functionally, catalyzes the condensation of pantoate with beta-alanine in an ATP-dependent reaction via a pantoyl-adenylate intermediate. The chain is Pantothenate synthetase from Shewanella baltica (strain OS195).